Consider the following 57-residue polypeptide: uncharacterized protein (57 aa).

This is an uncharacterized protein from Archaeoglobus fulgidus (strain ATCC 49558 / DSM 4304 / JCM 9628 / NBRC 100126 / VC-16).